The sequence spans 457 residues: COBRA-like protein 3 (457 aa).

Positions 1-35 are cleaved as a signal peptide; sequence MAVGGAGSSRSVAPCCCCAVLLAAALLFSAPATTE. 9 N-linked (GlcNAc...) asparagine glycosylation sites follow: Asn45, Asn170, Asn178, Asn217, Asn242, Asn258, Asn326, Asn341, and Asn361. Asn430 is lipidated: GPI-anchor amidated asparagine. A propeptide spans 431-457 (removed in mature form); sequence ASPLTKQPLTLSVLVFSIVLATLLAYA. Residues 437-457 form a helical membrane-spanning segment; the sequence is QPLTLSVLVFSIVLATLLAYA.

It belongs to the COBRA family.

The protein localises to the cell membrane. Involved in determining the orientation of cell expansion, probably by playing an important role in cellulose deposition. May act by recruiting cellulose synthesizing complexes to discrete positions on the cell surface. The sequence is that of COBRA-like protein 3 (BC1L4) from Oryza sativa subsp. japonica (Rice).